Reading from the N-terminus, the 57-residue chain is UPF0391 membrane protein Nwi_2359 (57 aa).

2 consecutive transmembrane segments (helical) span residues 4–24 and 30–50; these read WVVT…GGIA and IAKI…VVGF.

The protein belongs to the UPF0391 family.

The protein resides in the cell membrane. The sequence is that of UPF0391 membrane protein Nwi_2359 from Nitrobacter winogradskyi (strain ATCC 25391 / DSM 10237 / CIP 104748 / NCIMB 11846 / Nb-255).